A 278-amino-acid polypeptide reads, in one-letter code: Inner membrane mitoribosome receptor MBA1, mitochondrial (278 aa).

The transit peptide at 1–33 (MSVLRSTCLFFPPRSLLISFNKRRLFSTSRLIL) directs the protein to the mitochondrion.

In terms of assembly, interacts with OXA1 and MDM38. Binds to mitoribosomes in order to recruit them to the mitochondrial inner membrane.

The protein localises to the mitochondrion inner membrane. Functionally, mitochondrial inner membrane-associated mitoribosome receptor that spatially aligns the mitoribosome exit tunnel with the membrane insertion machinery and allows cotranslational protein membrane insertion. This is Inner membrane mitoribosome receptor MBA1, mitochondrial from Saccharomyces cerevisiae (strain ATCC 204508 / S288c) (Baker's yeast).